A 315-amino-acid chain; its full sequence is Transcription factor MafAa (315 aa).

Residues 52 to 104 (STPISTPCSSVPSSPSFCAPSPGSQPGQNLVNGVNNNNNNSGNGNNNTQGSSG) show a composition bias toward low complexity. 2 disordered regions span residues 52 to 108 (STPI…KPQM) and 169 to 191 (ATNG…AHAR). Over residues 172–189 (GHHHPVHHHHHHHGHHAH) the composition is skewed to basic residues. Residues 223 to 248 (RLKQKRRTLKNRGYAQSCRYKRVQQR) form a basic motif region. One can recognise a bZIP domain in the interval 223–286 (RLKQKRRTLK…DLYKEKYEKL (64 aa)). The interval 229-243 (RTLKNRGYAQSCRYK) is interaction with DNA. A leucine-zipper region spans residues 251 to 272 (LESEKCTLQSQVEQLKQDVARL). Residues 290–315 (AFNGGGNTRDPSSGNHVKTTSTDFFM) form a disordered region. Over residues 298-315 (RDPSSGNHVKTTSTDFFM) the composition is skewed to polar residues.

It belongs to the bZIP family. Maf subfamily.

It is found in the nucleus. In terms of biological role, transcription factor, possibly involved in transcription regulation during lens development, including that of crystallin genes. Specifically binds to the alphaCE2 enhancer element of crystallin gene. In Danio rerio (Zebrafish), this protein is Transcription factor MafAa (mafaa).